Consider the following 166-residue polypeptide: Chemoreceptor glutamine deamidase CheD (166 aa).

It belongs to the CheD family. As to quaternary structure, forms a complex with CheC.

It carries out the reaction L-glutaminyl-[protein] + H2O = L-glutamyl-[protein] + NH4(+). Its function is as follows. Deamidates glutamine residues to glutamate on methyl-accepting chemotaxis receptors (MCPs). CheD-mediated MCP deamidation is required for productive communication of the conformational signals of the chemoreceptors to the CheA kinase. This chain is Chemoreceptor glutamine deamidase CheD, found in Bacillus velezensis (strain DSM 23117 / BGSC 10A6 / LMG 26770 / FZB42) (Bacillus amyloliquefaciens subsp. plantarum).